Here is a 278-residue protein sequence, read N- to C-terminus: Phosphatidylglycerol--prolipoprotein diacylglyceryl transferase (278 aa).

Helical transmembrane passes span 19-39, 49-69, 86-106, and 112-132; these read WYGI…INEG, FIDF…IYYV, IWNG…VLLI, and MLPP…AQVI. Arg-134 is a binding site for a 1,2-diacyl-sn-glycero-3-phospho-(1'-sn-glycerol). 3 helical membrane-spanning segments follow: residues 174-194, 204-224, and 235-255; these read QPTY…ILSL, GEIF…VEGM, and IRVS…LWIY.

It belongs to the Lgt family.

The protein resides in the cell membrane. It carries out the reaction L-cysteinyl-[prolipoprotein] + a 1,2-diacyl-sn-glycero-3-phospho-(1'-sn-glycerol) = an S-1,2-diacyl-sn-glyceryl-L-cysteinyl-[prolipoprotein] + sn-glycerol 1-phosphate + H(+). The protein operates within protein modification; lipoprotein biosynthesis (diacylglyceryl transfer). Catalyzes the transfer of the diacylglyceryl group from phosphatidylglycerol to the sulfhydryl group of the N-terminal cysteine of a prolipoprotein, the first step in the formation of mature lipoproteins. The sequence is that of Phosphatidylglycerol--prolipoprotein diacylglyceryl transferase from Lactobacillus johnsonii (strain CNCM I-12250 / La1 / NCC 533).